The primary structure comprises 367 residues: UDP-N-acetylglucosamine--N-acetylmuramyl-(pentapeptide) pyrophosphoryl-undecaprenol N-acetylglucosamine transferase (367 aa).

Residues 15–17 (TGG), Asn126, Arg169, Ser197, and Gln298 contribute to the UDP-N-acetyl-alpha-D-glucosamine site.

It belongs to the glycosyltransferase 28 family. MurG subfamily.

It localises to the cell inner membrane. It carries out the reaction di-trans,octa-cis-undecaprenyl diphospho-N-acetyl-alpha-D-muramoyl-L-alanyl-D-glutamyl-meso-2,6-diaminopimeloyl-D-alanyl-D-alanine + UDP-N-acetyl-alpha-D-glucosamine = di-trans,octa-cis-undecaprenyl diphospho-[N-acetyl-alpha-D-glucosaminyl-(1-&gt;4)]-N-acetyl-alpha-D-muramoyl-L-alanyl-D-glutamyl-meso-2,6-diaminopimeloyl-D-alanyl-D-alanine + UDP + H(+). Its pathway is cell wall biogenesis; peptidoglycan biosynthesis. Functionally, cell wall formation. Catalyzes the transfer of a GlcNAc subunit on undecaprenyl-pyrophosphoryl-MurNAc-pentapeptide (lipid intermediate I) to form undecaprenyl-pyrophosphoryl-MurNAc-(pentapeptide)GlcNAc (lipid intermediate II). This Bradyrhizobium sp. (strain ORS 278) protein is UDP-N-acetylglucosamine--N-acetylmuramyl-(pentapeptide) pyrophosphoryl-undecaprenol N-acetylglucosamine transferase.